Reading from the N-terminus, the 113-residue chain is MAGPGAAFRRLGALSGAGALGLASYGAHGAQFPDAYGKELFDKTNKHHFLHSLALLAVPLCRKPLWAGLLLASGTTLFCTTFYYQALSGDPSFQNLAPVGGSLLLLGWLALAL.

The first 29 residues, 1-29 (MAGPGAAFRRLGALSGAGALGLASYGAHG), serve as a signal peptide directing secretion. The Extracellular portion of the chain corresponds to 30–63 (AQFPDAYGKELFDKTNKHHFLHSLALLAVPLCRK). An N6-acetyllysine modification is found at lysine 43. Residues 64–84 (PLWAGLLLASGTTLFCTTFYY) traverse the membrane as a helical segment. The Cytoplasmic segment spans residues 85 to 92 (QALSGDPS). The helical transmembrane segment at 93–113 (FQNLAPVGGSLLLLGWLALAL) threads the bilayer.

It belongs to the TMEM256 family.

The protein resides in the membrane. The chain is Transmembrane protein 256 (TMEM256) from Bos taurus (Bovine).